The chain runs to 931 residues: Protein unc-45 homolog B (931 aa).

TPR repeat units follow at residues 6–39, 43–76, and 77–110; these read AAQL…TKDK, ATLY…NSAD, and IKAL…EPRN. ARM repeat units follow at residues 169 to 208, 211 to 250, and 751 to 790; these read EAGA…GMCS, RARA…AIID, and DKLR…NMVL.

In terms of assembly, interacts with HSP90 in an ATP-independent manner. Interacts with UBE4B; the interaction may target UNC45B for proteasomal degradation. Highly expressed in adult skeletal muscle and heart. Detected at intermediate levels in lung. Highly expressed in embryonic heart.

It is found in the cytoplasm. The protein localises to the myofibril. Its subcellular location is the sarcomere. The protein resides in the z line. It localises to the a band. It is found in the perinuclear region. The protein localises to the cytosol. Its function is as follows. Acts as a co-chaperone for HSP90 and is required for proper folding of the myosin motor domain. Plays a role in sarcomere formation during muscle cell development. Is necessary for normal early lens development. In Mus musculus (Mouse), this protein is Protein unc-45 homolog B (Unc45b).